Reading from the N-terminus, the 92-residue chain is SPbeta prophage-derived DNA-binding protein HU 2 (92 aa).

Phosphothreonine is present on Thr-4. Residues 55–77 (RAARKGRNPQTGEEIDIPATKAP) are disordered.

It belongs to the bacterial histone-like protein family. Homodimer.

Functionally, histone-like DNA-binding protein which is capable of wrapping DNA to stabilize it, and thus to prevent its denaturation under extreme environmental conditions. The polypeptide is SPbeta prophage-derived DNA-binding protein HU 2 (hup2) (Bacillus subtilis (strain 168)).